The primary structure comprises 157 residues: Small ribosomal subunit protein uS7 (157 aa).

The protein belongs to the universal ribosomal protein uS7 family. As to quaternary structure, part of the 30S ribosomal subunit. Contacts proteins S9 and S11.

In terms of biological role, one of the primary rRNA binding proteins, it binds directly to 16S rRNA where it nucleates assembly of the head domain of the 30S subunit. Is located at the subunit interface close to the decoding center, probably blocks exit of the E-site tRNA. This chain is Small ribosomal subunit protein uS7, found in Francisella philomiragia subsp. philomiragia (strain ATCC 25017 / CCUG 19701 / FSC 153 / O#319-036).